The following is a 173-amino-acid chain: MNIIKKGFLMNEEIREKEVRVIAEDGEQLGVIPTSEALKRAEEKELDLVMIAPTGKPPVCKIMNYGKFIYEQTKKDKEAKKKQKVINVKEIRLSATIEEHDIGIKANNARKFLKAEDKVKVTVRFRGREMEHSNVVGNKILKTFLSKVEDVCVVEKPARLEGKNMTMVLAPRK.

The protein belongs to the IF-3 family. As to quaternary structure, monomer.

The protein resides in the cytoplasm. IF-3 binds to the 30S ribosomal subunit and shifts the equilibrium between 70S ribosomes and their 50S and 30S subunits in favor of the free subunits, thus enhancing the availability of 30S subunits on which protein synthesis initiation begins. In Clostridium tetani (strain Massachusetts / E88), this protein is Translation initiation factor IF-3.